The following is a 184-amino-acid chain: ADP-ribosylation factor-like protein 8b (184 aa).

An intramembrane region (note=Mediates targeting to membranes) is located at residues 1 to 18; the sequence is MGLWDALLNWLRSLFFKQ. GTP is bound by residues 29 to 34, 48 to 51, 70 to 74, and 129 to 132; these read NAGKTS, MIPT, DLGGQ, and NKID.

The protein belongs to the small GTPase superfamily. Arf family. In terms of assembly, interacts with tubulin.

It is found in the late endosome membrane. It localises to the lysosome membrane. The protein resides in the cytoplasm. Its subcellular location is the cytoskeleton. The protein localises to the spindle. May play a role in lysosome motility. May play a role in chromosome segregation. In terms of biological role, (Microbial infection) Component of tomato mosaic virus (ToMV) RNA replication complexes. Required for tobamovirus multiplication, especially for efficient negative-strand RNA synthesis and viral RNA capping. The protein is ADP-ribosylation factor-like protein 8b of Arabidopsis thaliana (Mouse-ear cress).